Here is a 294-residue protein sequence, read N- to C-terminus: uncharacterized protein (294 aa).

Residues 5–25 form a helical membrane-spanning segment; that stretch reads ILIILIIIIIVIISLIYLKNF. N151, N170, N205, and N271 each carry an N-linked (GlcNAc...) asparagine; by host glycan.

Its subcellular location is the membrane. This is an uncharacterized protein from Acanthamoeba polyphaga (Amoeba).